Reading from the N-terminus, the 210-residue chain is N-(5'-phosphoribosyl)anthranilate isomerase (210 aa).

It belongs to the TrpF family.

The enzyme catalyses N-(5-phospho-beta-D-ribosyl)anthranilate = 1-(2-carboxyphenylamino)-1-deoxy-D-ribulose 5-phosphate. It participates in amino-acid biosynthesis; L-tryptophan biosynthesis; L-tryptophan from chorismate: step 3/5. This Methanococcus aeolicus (strain ATCC BAA-1280 / DSM 17508 / OCM 812 / Nankai-3) protein is N-(5'-phosphoribosyl)anthranilate isomerase.